Consider the following 379-residue polypeptide: Cytochrome b (379 aa).

A run of 4 helical transmembrane segments spans residues 33-53 (FGSL…FLAM), 77-98 (WLIR…FIHV), 113-133 (WNIG…GYVL), and 178-198 (FFAF…VHLL). Positions 83 and 97 each coordinate heme b. Heme b-binding residues include His-182 and His-196. His-201 lines the a ubiquinone pocket. 4 helical membrane-spanning segments follow: residues 226 to 246 (TKDL…ALFF), 288 to 308 (LGGV…PLLN), 320 to 340 (VTQV…WIGG), and 347 to 367 (FTMI…ILMP).

The protein belongs to the cytochrome b family. As to quaternary structure, the cytochrome bc1 complex contains 11 subunits: 3 respiratory subunits (MT-CYB, CYC1 and UQCRFS1), 2 core proteins (UQCRC1 and UQCRC2) and 6 low-molecular weight proteins (UQCRH/QCR6, UQCRB/QCR7, UQCRQ/QCR8, UQCR10/QCR9, UQCR11/QCR10 and a cleavage product of UQCRFS1). This cytochrome bc1 complex then forms a dimer. Requires heme b as cofactor.

It is found in the mitochondrion inner membrane. In terms of biological role, component of the ubiquinol-cytochrome c reductase complex (complex III or cytochrome b-c1 complex) that is part of the mitochondrial respiratory chain. The b-c1 complex mediates electron transfer from ubiquinol to cytochrome c. Contributes to the generation of a proton gradient across the mitochondrial membrane that is then used for ATP synthesis. This is Cytochrome b (MT-CYB) from Akodon kofordi (Koford's grass mouse).